A 78-amino-acid chain; its full sequence is MKLTCMMIVAVLFLTAWTFATADDPRNGLGNLFSNAHHEMKNPEASKLNKRWCKQSGEMCNLLDQNCCDGYCIVLVCT.

The N-terminal stretch at 1 to 22 (MKLTCMMIVAVLFLTAWTFATA) is a signal peptide. The propeptide occupies 23-49 (DDPRNGLGNLFSNAHHEMKNPEASKLN). 3 disulfides stabilise this stretch: cysteine 53–cysteine 68, cysteine 60–cysteine 72, and cysteine 67–cysteine 77. Methionine 59 carries the methionine sulfoxide; partial modification.

This sequence belongs to the conotoxin O1 superfamily. Expressed by the venom duct.

It localises to the secreted. Functionally, delta-conotoxins bind to site 6 of voltage-gated sodium channels (Nav) and inhibit the inactivation process. Binding of this toxin is strongly calcium-dependent but not voltage-dependent. The binding site is most likely on the extracellular side of the sodium channel. Binds receptor sites on both mollusk and rat central nervous system, but despite its high affinity binding to rat sodium channel, it has no functional effect in vivo and in vitro on it. Also has no effect on Gambusia fish. Is important in mollusk for the paralysis of the prey. Upon injection of the peptide, a subordinate lobster assumes an exaggerated dominant posture (of a 'King-Kong' lobster!). The protein is Delta-conotoxin TxVIA of Conus textile (Cloth-of-gold cone).